A 267-amino-acid chain; its full sequence is Indole-3-glycerol phosphate synthase (267 aa).

Belongs to the TrpC family.

The enzyme catalyses 1-(2-carboxyphenylamino)-1-deoxy-D-ribulose 5-phosphate + H(+) = (1S,2R)-1-C-(indol-3-yl)glycerol 3-phosphate + CO2 + H2O. The protein operates within amino-acid biosynthesis; L-tryptophan biosynthesis; L-tryptophan from chorismate: step 4/5. This chain is Indole-3-glycerol phosphate synthase, found in Cupriavidus pinatubonensis (strain JMP 134 / LMG 1197) (Cupriavidus necator (strain JMP 134)).